A 269-amino-acid chain; its full sequence is Ubiquinone/menaquinone biosynthesis C-methyltransferase UbiE (269 aa).

Residues T92, D113, and 141–142 (NA) each bind S-adenosyl-L-methionine.

Belongs to the class I-like SAM-binding methyltransferase superfamily. MenG/UbiE family.

It carries out the reaction a 2-demethylmenaquinol + S-adenosyl-L-methionine = a menaquinol + S-adenosyl-L-homocysteine + H(+). It catalyses the reaction a 2-methoxy-6-(all-trans-polyprenyl)benzene-1,4-diol + S-adenosyl-L-methionine = a 5-methoxy-2-methyl-3-(all-trans-polyprenyl)benzene-1,4-diol + S-adenosyl-L-homocysteine + H(+). Its pathway is quinol/quinone metabolism; menaquinone biosynthesis; menaquinol from 1,4-dihydroxy-2-naphthoate: step 2/2. The protein operates within cofactor biosynthesis; ubiquinone biosynthesis. Functionally, methyltransferase required for the conversion of demethylmenaquinol (DMKH2) to menaquinol (MKH2) and the conversion of 2-polyprenyl-6-methoxy-1,4-benzoquinol (DDMQH2) to 2-polyprenyl-3-methyl-6-methoxy-1,4-benzoquinol (DMQH2). The protein is Ubiquinone/menaquinone biosynthesis C-methyltransferase UbiE of Brucella suis (strain ATCC 23445 / NCTC 10510).